The following is a 1008-amino-acid chain: CRAL-TRIO domain-containing protein C23B6.04c (1008 aa).

3 disordered regions span residues 1-247 (MKDS…AKSE), 284-306 (DGRD…DVDS), and 374-514 (QKVV…ASAK). Over residues 79–110 (TVHTKTGSSSSPASKMRNTVNLQHIQAANQKT) the composition is skewed to polar residues. 2 stretches are compositionally biased toward basic and acidic residues: residues 111 to 131 (RNAE…KAEA) and 170 to 187 (MNDK…DSKL). 4 stretches are compositionally biased toward polar residues: residues 374–389 (QKVV…STDN), 397–432 (DHPS…TSPK), 467–478 (GGNSVTAPSTPS), and 495–505 (GRSSTAPSTPN). Phosphoserine occurs at positions 525 and 559. Positions 675 to 828 (EIQEENATGK…NFGGSLHFEY (154 aa)) constitute a CRAL-TRIO domain. The disordered stretch occupies residues 883–982 (SLTNRSSSPT…KSGSGVSETP (100 aa)). Positions 885-899 (TNRSSSPTVTPTVNT) are enriched in low complexity. Residues Ser-888 and Ser-890 each carry the phosphoserine modification. Basic and acidic residues predominate over residues 914–931 (SPQKRRVENPKPVVKDEG).

It localises to the cell membrane. The chain is CRAL-TRIO domain-containing protein C23B6.04c from Schizosaccharomyces pombe (strain 972 / ATCC 24843) (Fission yeast).